The chain runs to 479 residues: GTPase Obg (479 aa).

Positions 2-159 constitute an Obg domain; it reads TTFVDRVELH…QDIVLELKTV (158 aa). A disordered region spans residues 61–87; sequence HHKPHRSATNGKPGEGGNRSGKDGQDL. The 172-residue stretch at 160-331 folds into the OBG-type G domain; sequence ADVALVGYPS…LSFALAELVG (172 aa). GTP contacts are provided by residues 166–173, 191–195, 212–215, 283–286, and 312–314; these read GYPSAGKS, FTTLV, DVPG, NKID, and SAV. The Mg(2+) site is built by serine 173 and threonine 193. In terms of domain architecture, OCT spans 349-431; sequence PKAVDDAGFT…DNAVVFDWEP (83 aa). Over residues 440-453 the composition is skewed to basic and acidic residues; it reads LGRRGEDHRLDEPR. The tract at residues 440–479 is disordered; the sequence is LGRRGEDHRLDEPRPAAQRRRDKQAERDDAEKEYDDFEPF. Acidic residues predominate over residues 470 to 479; sequence EKEYDDFEPF.

The protein belongs to the TRAFAC class OBG-HflX-like GTPase superfamily. OBG GTPase family. As to quaternary structure, monomer. The cofactor is Mg(2+).

It localises to the cytoplasm. An essential GTPase which binds GTP, GDP and possibly (p)ppGpp with moderate affinity, with high nucleotide exchange rates and a fairly low GTP hydrolysis rate. Plays a role in control of the cell cycle, stress response, ribosome biogenesis and in those bacteria that undergo differentiation, in morphogenesis control. This is GTPase Obg from Streptomyces avermitilis (strain ATCC 31267 / DSM 46492 / JCM 5070 / NBRC 14893 / NCIMB 12804 / NRRL 8165 / MA-4680).